The chain runs to 290 residues: Protease HtpX (290 aa).

Transmembrane regions (helical) follow at residues 4 to 24 and 36 to 56; these read IFLF…TLKL and GSLL…SLFI. H142 is a Zn(2+) binding site. E143 is a catalytic residue. Residue H146 participates in Zn(2+) binding. The next 2 helical transmembrane spans lie at 150 to 170 and 193 to 213; these read GDMV…MFFA and FVAT…IVMW. A Zn(2+)-binding site is contributed by E219.

The protein belongs to the peptidase M48B family. Zn(2+) is required as a cofactor.

Its subcellular location is the cell inner membrane. The sequence is that of Protease HtpX from Stutzerimonas stutzeri (strain A1501) (Pseudomonas stutzeri).